The following is a 263-amino-acid chain: Putative 2-aminoethylphosphonate transport system permease protein PhnV (263 aa).

6 helical membrane-spanning segments follow: residues 13 to 33, 69 to 89, 104 to 124, 131 to 151, 185 to 205, and 233 to 253; these read GVVASVLFIVFFFLPLAVILM, LTIGFCASLFALLCGVWAALA, VFYLPSAIPSVSVGLGILVAF, MNGTLWIVLTAHFVLISAFTF, LPLLMPWMVSELALSLSLSMG, and NIADGAALTIVLVAITLLLMM. The region spanning 65–253 is the ABC transmembrane type-1 domain; sequence LLASLTIGFC…LVAITLLLMM (189 aa).

Belongs to the binding-protein-dependent transport system permease family.

The protein resides in the cell inner membrane. Probably part of the PhnSTUV complex (TC 3.A.1.11.5) involved in 2-aminoethylphosphonate import. Probably responsible for the translocation of the substrate across the membrane. This is Putative 2-aminoethylphosphonate transport system permease protein PhnV (phnV) from Salmonella typhi.